The chain runs to 138 residues: MLLYSISKAAEKTSISSYTLRYYEKIGLLPPPKRKNSGRRFYTETDIQFMLFLKSLKETGMSLEDINEFVKDGCILEKINSDVKSAQLSPSINKRIEILTKHLEKMEIKKRELEEVISTTKGKLDTYYSILKEEVENK.

An HTH merR-type domain is found at 3–72 (LYSISKAAEK…LEDINEFVKD (70 aa)). Positions 6–25 (ISKAAEKTSISSYTLRYYEK) form a DNA-binding region, H-T-H motif.

This is an uncharacterized protein from Bacillus subtilis (strain 168).